Reading from the N-terminus, the 248-residue chain is 2,3-bisphosphoglycerate-dependent phosphoglycerate mutase (248 aa).

Substrate contacts are provided by residues 8–15, 21–22, arginine 60, 87–90, lysine 98, 114–115, and 183–184; these read RHGESTWN, TG, ERHY, RR, and GN. The active-site Tele-phosphohistidine intermediate is histidine 9. Glutamate 87 acts as the Proton donor/acceptor in catalysis.

It belongs to the phosphoglycerate mutase family. BPG-dependent PGAM subfamily. As to quaternary structure, homodimer.

The enzyme catalyses (2R)-2-phosphoglycerate = (2R)-3-phosphoglycerate. Its pathway is carbohydrate degradation; glycolysis; pyruvate from D-glyceraldehyde 3-phosphate: step 3/5. Its function is as follows. Catalyzes the interconversion of 2-phosphoglycerate and 3-phosphoglycerate. This Paraburkholderia phymatum (strain DSM 17167 / CIP 108236 / LMG 21445 / STM815) (Burkholderia phymatum) protein is 2,3-bisphosphoglycerate-dependent phosphoglycerate mutase.